The primary structure comprises 291 residues: N-acetylmannosamine kinase (291 aa).

ATP contacts are provided by residues 5–12 (AIDIGGTK) and 132–139 (GVGGGVVC). Zn(2+) is bound by residues histidine 156, cysteine 166, cysteine 168, and cysteine 173.

This sequence belongs to the ROK (NagC/XylR) family. NanK subfamily. Homodimer.

The enzyme catalyses an N-acyl-D-mannosamine + ATP = an N-acyl-D-mannosamine 6-phosphate + ADP + H(+). It functions in the pathway amino-sugar metabolism; N-acetylneuraminate degradation; D-fructose 6-phosphate from N-acetylneuraminate: step 2/5. Its function is as follows. Catalyzes the phosphorylation of N-acetylmannosamine (ManNAc) to ManNAc-6-P. This chain is N-acetylmannosamine kinase, found in Salmonella dublin (strain CT_02021853).